The chain runs to 149 residues: Nucleoside diphosphate kinase (149 aa).

6 residues coordinate ATP: K9, F57, R85, T91, R102, and N112. H115 serves as the catalytic Pros-phosphohistidine intermediate.

Belongs to the NDK family. Mg(2+) serves as cofactor.

It localises to the cytoplasm. The catalysed reaction is a 2'-deoxyribonucleoside 5'-diphosphate + ATP = a 2'-deoxyribonucleoside 5'-triphosphate + ADP. It carries out the reaction a ribonucleoside 5'-diphosphate + ATP = a ribonucleoside 5'-triphosphate + ADP. Major role in the synthesis of nucleoside triphosphates other than ATP. The ATP gamma phosphate is transferred to the NDP beta phosphate via a ping-pong mechanism, using a phosphorylated active-site intermediate. This Methanosarcina mazei (strain ATCC BAA-159 / DSM 3647 / Goe1 / Go1 / JCM 11833 / OCM 88) (Methanosarcina frisia) protein is Nucleoside diphosphate kinase.